The primary structure comprises 182 residues: Thioredoxin X, chloroplastic (182 aa).

The N-terminal 67 residues, 1 to 67 (MDSIVSSSTI…TRKSSSSVIR (67 aa)), are a transit peptide targeting the chloroplast. The region spanning 68–177 (CGGIKEIGES…LKEYIDGLLN (110 aa)) is the Thioredoxin domain. Catalysis depends on nucleophile residues Cys-99 and Cys-102. Cys-99 and Cys-102 form a disulfide bridge.

It belongs to the thioredoxin family. In terms of tissue distribution, predominantly expressed in leaves.

Its subcellular location is the plastid. The protein localises to the chloroplast stroma. Its function is as follows. Probable thiol-disulfide oxidoreductase that may participate in various redox reactions. The polypeptide is Thioredoxin X, chloroplastic (ATHX) (Arabidopsis thaliana (Mouse-ear cress)).